Consider the following 628-residue polypeptide: Glutamyl-tRNA(Gln) amidotransferase subunit E (628 aa).

It belongs to the GatB/GatE family. GatE subfamily. In terms of assembly, heterodimer of GatD and GatE.

It carries out the reaction L-glutamyl-tRNA(Gln) + L-glutamine + ATP + H2O = L-glutaminyl-tRNA(Gln) + L-glutamate + ADP + phosphate + H(+). Functionally, allows the formation of correctly charged Gln-tRNA(Gln) through the transamidation of misacylated Glu-tRNA(Gln) in organisms which lack glutaminyl-tRNA synthetase. The reaction takes place in the presence of glutamine and ATP through an activated gamma-phospho-Glu-tRNA(Gln). The GatDE system is specific for glutamate and does not act on aspartate. This chain is Glutamyl-tRNA(Gln) amidotransferase subunit E, found in Pyrococcus furiosus (strain ATCC 43587 / DSM 3638 / JCM 8422 / Vc1).